A 293-amino-acid polypeptide reads, in one-letter code: MANISAALVKELRERTAAGMMDCKKALEEAAGDIELAIENMRKSGQAKAAKKAGRIAAEGVIFARTEGNVAVMIELNCETDFVSKDAGFLAMGQKIVEIAATQKIADVDALKAADFGNGESVELTITNLIAKIGENMNLRRVMLVEGDNLGTYVHGSRIGVITKLAGGSDELAKDLAMHVAANSPQFVKPEDVSAEVVAKEREIQIDIAINSGKPKEIAEKMVEGRMKKFTGEVSLTGQPFVKDPSMTVAELLKKEGADVVSFTRFEVGEGIEKQETDFAAEVAAQIAAAQKA.

Residues 80 to 83 form an involved in Mg(2+) ion dislocation from EF-Tu region; the sequence is TDFV.

The protein belongs to the EF-Ts family.

It localises to the cytoplasm. Functionally, associates with the EF-Tu.GDP complex and induces the exchange of GDP to GTP. It remains bound to the aminoacyl-tRNA.EF-Tu.GTP complex up to the GTP hydrolysis stage on the ribosome. In Aeromonas hydrophila subsp. hydrophila (strain ATCC 7966 / DSM 30187 / BCRC 13018 / CCUG 14551 / JCM 1027 / KCTC 2358 / NCIMB 9240 / NCTC 8049), this protein is Elongation factor Ts.